The chain runs to 92 residues: Endoribonuclease VapD homolog (92 aa).

The protein belongs to the VapD ribonuclease family. In terms of assembly, homodimer.

In terms of biological role, cleaves ssRNA, mostly between U:A. The polypeptide is Endoribonuclease VapD homolog (Neisseria gonorrhoeae).